A 796-amino-acid polypeptide reads, in one-letter code: Protein tyrosine phosphatase domain-containing protein 1 (796 aa).

The region spanning 126–297 (YSSWVTDNIL…LIPLRNIFSC (172 aa)) is the Tyrosine-protein phosphatase domain. Cys234 acts as the Phosphocysteine intermediate in catalysis. Ser435 and Ser437 each carry phosphoserine.

This sequence belongs to the protein-tyrosine phosphatase family. Non-receptor class PTPDC1 subfamily.

Its function is as follows. May play roles in cilia formation and/or maintenance. This Bos taurus (Bovine) protein is Protein tyrosine phosphatase domain-containing protein 1 (PTPDC1).